The primary structure comprises 656 residues: Spermatogenesis-associated protein 13 (656 aa).

The segment covering 1–12 has biased composition (polar residues); it reads MHPASVTTTSQD. Residues 1–26 form a disordered region; the sequence is MHPASVTTTSQDPCAPSGSCRGGRRR. Ser-82 is subject to Phosphoserine. The tract at residues 85 to 115 is disordered; sequence IGLDRVGRRRQMKTSNVSSDGGAESSALVDD. Positions 102–154 are ABR (APC-binding region) domain; sequence SSDGGAESSALVDDNGSEEDFSYEELCQANPRYLQPGGEQLAINELISDGSVV. Residue Ser-118 is modified to Phosphoserine. The SH3 domain maps to 151–210; the sequence is GSVVCAEALWDHVTMDDQELGFKAGDVIQVLEASNKDWWWGRNEDKEAWFPASFVRLRVN. The tract at residues 215–242 is disordered; that stretch reads PENCSSSHGEEQDEDTSKARHKHPESQQ. Residues 244–428 enclose the DH domain; sequence MRTNVIQEIM…KNVACLINER (185 aa). The region spanning 459–565 is the PH domain; sequence ELIHSGELTK…WLQAYADERR (107 aa). The interval 565–656 is C-terminal tail; that stretch reads RRVQEDQQMG…TFHKLTPFRK (92 aa).

In terms of assembly, interacts (via ABR and SH3 domain) with APC. The binding of APC enhances its GEF activity by relieving it from an autoinhibitory conformation, in which the ABR and SH3 domains are associated with the C-terminal tail. Interacts (via C-terminal tail) with PPP1R9B (via C-terminus). Interacts with RAC1. As to expression, expression is aberrantly enhanced in most colorectal tumors.

Its subcellular location is the cytoplasm. The protein resides in the cell projection. It localises to the filopodium. It is found in the lamellipodium. The protein localises to the ruffle membrane. Its subcellular location is the podosome. Both the ABR and the SH3 domains contribute to maintaining the protein in an inhibited conformation by associating with the C-terminal tail. Binding of these domains to the C-terminal tail inhibits the activity of the protein by blocking a region that is required for its GEF activity. Functionally, acts as a guanine nucleotide exchange factor (GEF) for RHOA, RAC1 and CDC42 GTPases. Regulates cell migration and adhesion assembly and disassembly through a RAC1, PI3K, RHOA and AKT1-dependent mechanism. Increases both RAC1 and CDC42 activity, but decreases the amount of active RHOA. Required for MMP9 up-regulation via the JNK signaling pathway in colorectal tumor cells. Involved in tumor angiogenesis and may play a role in intestinal adenoma formation and tumor progression. In Mus musculus (Mouse), this protein is Spermatogenesis-associated protein 13 (Spata13).